The following is a 734-amino-acid chain: Photosystem I P700 chlorophyll a apoprotein A2 (734 aa).

The next 8 helical transmembrane spans lie at 46-69, 135-158, 175-199, 273-291, 330-353, 369-395, 417-439, and 517-535; these read IFASHFGQLAIIFLWTSGNLFHVA, LYTGALFLLCLSAISLIAGWLHLQ, LNHHLSGLFGVSSLAWAGHLVHVAI, IAHHHLAIAFLFLVAGHMY, IHFQLGLALASLGVITSLVAQHMY, AALYTHHQYIAGFIMTGAFAHGAIFFI, AIISHLSWASLFLGFHTLGLYVH, and FLVHHAIALGLHTTTLILV. [4Fe-4S] cluster-binding residues include C559 and C568. A run of 2 helical transmembrane segments spans residues 575-596 and 643-665; these read AFYLAVFWMLNTIGWVTFYWHW and LSVWAWMFLFGHLVWATGFMFLI. Chlorophyll a is bound by residues H654, M662, and Y670. W671 contributes to the phylloquinone binding site. Residues 707 to 727 form a helical membrane-spanning segment; that stretch reads LVGLAHFSVGYIFTYAAFLIA.

The protein belongs to the PsaA/PsaB family. As to quaternary structure, the PsaA/B heterodimer binds the P700 chlorophyll special pair and subsequent electron acceptors. PSI consists of a core antenna complex that captures photons, and an electron transfer chain that converts photonic excitation into a charge separation. The eukaryotic PSI reaction center is composed of at least 11 subunits. It depends on P700 is a chlorophyll a/chlorophyll a' dimer, A0 is one or more chlorophyll a, A1 is one or both phylloquinones and FX is a shared 4Fe-4S iron-sulfur center. as a cofactor.

Its subcellular location is the plastid. The protein resides in the chloroplast thylakoid membrane. The enzyme catalyses reduced [plastocyanin] + hnu + oxidized [2Fe-2S]-[ferredoxin] = oxidized [plastocyanin] + reduced [2Fe-2S]-[ferredoxin]. Functionally, psaA and PsaB bind P700, the primary electron donor of photosystem I (PSI), as well as the electron acceptors A0, A1 and FX. PSI is a plastocyanin-ferredoxin oxidoreductase, converting photonic excitation into a charge separation, which transfers an electron from the donor P700 chlorophyll pair to the spectroscopically characterized acceptors A0, A1, FX, FA and FB in turn. Oxidized P700 is reduced on the lumenal side of the thylakoid membrane by plastocyanin. The protein is Photosystem I P700 chlorophyll a apoprotein A2 of Dioscorea elephantipes (Elephant's foot yam).